Reading from the N-terminus, the 469-residue chain is Neuraminidase (469 aa).

At 1 to 9 (MNPNQKIIT) the chain is on the intravirion side. Residues 10-30 (IGSVSLTFAAICFLMQIAILV) traverse the membrane as a helical segment. The tract at residues 11–33 (GSVSLTFAAICFLMQIAILVTTV) is involved in apical transport and lipid raft association. The Virion surface portion of the chain corresponds to 31-469 (TTVTLNFKQY…DGADINLMPI (439 aa)). The segment at 36-88 (NFKQYECDPPATNQVMPCEPIIIERNITEIVYLTNTTIEREICPKLVEYRNWS) is hypervariable stalk region. Asn-61, Asn-70, and Asn-86 each carry an N-linked (GlcNAc...) asparagine; by host glycan. The head of neuraminidase stretch occupies residues 91–469 (QCKITGFAPF…DGADINLMPI (379 aa)). 8 disulfide bridges follow: Cys-92–Cys-417, Cys-124–Cys-129, Cys-183–Cys-230, Cys-232–Cys-237, Cys-278–Cys-291, Cys-280–Cys-289, Cys-318–Cys-337, and Cys-421–Cys-447. A substrate-binding site is contributed by Arg-118. Residue Asn-146 is glycosylated (N-linked (GlcNAc...) asparagine; by host). The Proton donor/acceptor role is filled by Asp-151. Substrate is bound at residue Arg-152. 2 N-linked (GlcNAc...) asparagine; by host glycosylation sites follow: Asn-200 and Asn-234. Position 276 to 277 (276 to 277 (EE)) interacts with substrate. Residue Arg-292 participates in substrate binding. Residues Asp-293 and Gly-297 each contribute to the Ca(2+) site. Asn-313 carries an N-linked (GlcNAc...) asparagine; by host glycan. Asp-324 lines the Ca(2+) pocket. Position 371 (Arg-371) interacts with substrate. Asn-402 carries N-linked (GlcNAc...) asparagine; by host glycosylation. Catalysis depends on Tyr-406, which acts as the Nucleophile.

Belongs to the glycosyl hydrolase 34 family. Homotetramer. Ca(2+) is required as a cofactor. In terms of processing, N-glycosylated.

The protein localises to the virion membrane. It localises to the host apical cell membrane. It carries out the reaction Hydrolysis of alpha-(2-&gt;3)-, alpha-(2-&gt;6)-, alpha-(2-&gt;8)- glycosidic linkages of terminal sialic acid residues in oligosaccharides, glycoproteins, glycolipids, colominic acid and synthetic substrates.. Its activity is regulated as follows. Inhibited by the neuraminidase inhibitors zanamivir (Relenza) and oseltamivir (Tamiflu). These drugs interfere with the release of progeny virus from infected cells and are effective against all influenza strains. Resistance to neuraminidase inhibitors is quite rare. Its function is as follows. Catalyzes the removal of terminal sialic acid residues from viral and cellular glycoconjugates. Cleaves off the terminal sialic acids on the glycosylated HA during virus budding to facilitate virus release. Additionally helps virus spread through the circulation by further removing sialic acids from the cell surface. These cleavages prevent self-aggregation and ensure the efficient spread of the progeny virus from cell to cell. Otherwise, infection would be limited to one round of replication. Described as a receptor-destroying enzyme because it cleaves a terminal sialic acid from the cellular receptors. May facilitate viral invasion of the upper airways by cleaving the sialic acid moieties on the mucin of the airway epithelial cells. Likely to plays a role in the budding process through its association with lipid rafts during intracellular transport. May additionally display a raft-association independent effect on budding. Plays a role in the determination of host range restriction on replication and virulence. Sialidase activity in late endosome/lysosome traffic seems to enhance virus replication. The protein is Neuraminidase of Influenza A virus (strain A/Swine/Kanagawa/2/1978 H1N2).